The following is a 141-amino-acid chain: Antifungal protein ginkbilobin-like protein 1 (141 aa).

A signal peptide spans 1-32; the sequence is MSISSKFQLRSSTSLLLLVALMVVMGMDGAAA. Positions 36–141 constitute a Gnk2-homologous domain; that stretch reads TNFVSSACNT…CFIQYEQHSF (106 aa). 3 cysteine pairs are disulfide-bonded: Cys43-Cys119, Cys95-Cys104, and Cys107-Cys132. Position 44 (Asn44) interacts with alpha-D-mannopyranose. The alpha-D-mannopyranose site is built by Arg126 and Glu137.

Its function is as follows. Exerts antifungal activity through its carbohydrate-binding specificity. The chain is Antifungal protein ginkbilobin-like protein 1 from Picea glauca (White spruce).